A 98-amino-acid chain; its full sequence is Hainantoxin-XVII (98 aa).

The signal sequence occupies residues Met-1–Ala-40. The propeptide occupies Gln-41–Arg-64. 3 cysteine pairs are disulfide-bonded: Cys-66–Cys-81, Cys-73–Cys-85, and Cys-80–Cys-95.

The protein belongs to the hainantoxin family. 17 subfamily. Expressed by the venom gland.

The protein resides in the secreted. Its function is as follows. Putative ion channel inhibitor. In Cyriopagopus hainanus (Chinese bird spider), this protein is Hainantoxin-XVII.